The following is a 282-amino-acid chain: Homeobox protein pv.1 (282 aa).

2 stretches are compositionally biased toward basic and acidic residues: residues glutamate 17–methionine 26 and tyrosine 44–glutamate 59. Positions glutamate 17 to leucine 128 are disordered. Polar residues-rich tracts occupy residues tryptophan 86–glycine 96 and glutamate 103–glutamate 114. A compositionally biased stretch (basic and acidic residues) spans glutamate 116–leucine 128. Residues glutamine 129 to isoleucine 188 constitute a DNA-binding region (homeobox).

Expressed in the ventral marginal zone of blastulae. At early gastrulation, expression begins to spread to the animal pole (ectoderm), and at stage 11.5 is expressed in a gradient across the animal cap, with levels highest in the ventral region. At the end of gastrulation, predominantly localized to the ventral and lateral regions of the closing slit blastopore. Also expressed at a low level in ventral endoderm.

Its subcellular location is the nucleus. Functionally, transcriptional repressor. Acts in a ventral signaling pathway downstream of bmp4, which suppresses dorsal mesoderm formation and leads to both ventral mesoderm and ventral ectoderm formation. Acts in the ectoderm to simultaneously specify epidermal lineages and restrict neuralization. Represses transcription of dorsal-specific genes. Binds to DNA, with preference for the target sequences 5'-TAATGC-3' and 5'-TAATTG-3'. Acts in a pathway downstream of bmp4 and fgf to negatively regulate erythroid specification. The polypeptide is Homeobox protein pv.1 (Xenopus laevis (African clawed frog)).